A 416-amino-acid chain; its full sequence is MQIFEELESAVRSYSRGWPTIFEKAKGYKLWDIDGNMYIDFFAGAGALNYGHNHDTMQEKLIAYIQDDHIIHSLDMGTTPRKTFLETFHNTILKPRNLDYKIMFPGPTGTNTVESALKIARKVTGRDTVISFTNAFHGMTIGSLSVTGNSFKRHGAGVPLHHSVSMPYDKYVNDQDSIAYLERFLEDSGSGVALPAAIILETVQGEGGINAASIEWLQKIASICERWDILLIIDDVQAGCGRTGTFFSFEPAGIAPDIVCLSKSIGGIGLPMAITLIKPEYDQWGPGEHNGTFRGNNLAFIAATEALTAFWQDNTFSKSIIQKSKLVRQRIDRIIDKFPSLQGEARGRGLMQGIVIPEPNCASEICKAAFDIGLIVETSGPNDEVVKFLPPLIIDKEGINQGFDILEVSMEHVLKK.

At lysine 263 the chain carries N6-(pyridoxal phosphate)lysine.

The protein belongs to the class-III pyridoxal-phosphate-dependent aminotransferase family. The cofactor is pyridoxal 5'-phosphate.

It catalyses the reaction L-2,4-diaminobutanoate + 2-oxoglutarate = L-aspartate 4-semialdehyde + L-glutamate. The protein operates within amine and polyamine biosynthesis; ectoine biosynthesis; L-ectoine from L-aspartate 4-semialdehyde: step 1/3. In terms of biological role, catalyzes reversively the conversion of L-aspartate beta-semialdehyde (ASA) to L-2,4-diaminobutyrate (DABA) by transamination with L-glutamate. The chain is Diaminobutyrate--2-oxoglutarate transaminase (ectB) from Virgibacillus pantothenticus.